Consider the following 113-residue polypeptide: U11-theraphotoxin-Hhn1r (113 aa).

The N-terminal stretch at 1 to 21 (MNTVRVTFLLVFVLAVSLGQA) is a signal peptide. Residues 22–74 (DKDENRMEMQEKTEQGKSYLDFAENLLLQKLEELEAKLLEEDSEESRNSRQKR) constitute a propeptide that is removed on maturation. The segment at 61–83 (EEDSEESRNSRQKRCIGEGVPCD) is disordered. 3 disulfides stabilise this stretch: C75/C90, C82/C95, and C89/C110.

This sequence belongs to the neurotoxin 14 (magi-1) family. 01 (HNTX-16) subfamily. As to expression, expressed by the venom gland.

The protein resides in the secreted. Probable ion channel inhibitor. The sequence is that of U11-theraphotoxin-Hhn1r from Cyriopagopus hainanus (Chinese bird spider).